Reading from the N-terminus, the 116-residue chain is Venom nerve growth factor (116 aa).

3 disulfides stabilise this stretch: Cys-14-Cys-78, Cys-56-Cys-106, and Cys-66-Cys-108. Lys-86 contacts a 1,2-diacyl-sn-glycerol.

This sequence belongs to the NGF-beta family. Homodimer; non-covalently linked. Interacts with NTRK1. Post-translationally, not glycosylated. In terms of tissue distribution, expressed by the venom gland.

It localises to the secreted. Nerve growth factor is important for the development and maintenance of the sympathetic and sensory nervous systems. It stimulates division and differentiation of sympathetic and embryonic sensory neurons as well as basal forebrain cholinergic neurons in the brain. Its relevance in the snake venom is not clear. However, it has been shown to inhibit metalloproteinase-dependent proteolysis of platelet glycoprotein Ib alpha, suggesting a metalloproteinase inhibition to prevent metalloprotease autodigestion and/or protection against prey proteases. Binds a lipid between the two protein chains in the homodimer. The lipid-bound form promotes histamine relase from mouse mast cells, contrary to the lipid-free form. The protein is Venom nerve growth factor of Naja atra (Chinese cobra).